We begin with the raw amino-acid sequence, 252 residues long: Secreted LysM effector LysM1 (252 aa).

In terms of domain architecture, LysM 1 spans 20–64 (FAIPGDPGDTCDTLSDRWGITIDIFKSLNPGVNCPNLVANMEYCV). The disordered stretch occupies residues 71-98 (DTPSTTTTAKPTMTPTSTPTKTTTTSTA). Residues 72 to 98 (TPSTTTTAKPTMTPTSTPTKTTTTSTA) are compositionally biased toward low complexity. LysM domains lie at 126 to 172 (KFHL…YVCV) and 204 to 250 (KFHL…YVCI).

It belongs to the secreted LysM effector family.

The protein localises to the secreted. Its subcellular location is the cell wall. Secreted effector that binds two substrates, chitin and N-linked oligosaccharides associated with human skin glycoproteins. Could provide the pathogen with three important functions including shielding host cell wall chitin from the human immune system, shielding the pathogen's glycoproteins from host degradation and immune surveillance, and helping facilitate pathogen adhesion to human skin. This is Secreted LysM effector LysM1 from Trichophyton rubrum (strain ATCC MYA-4607 / CBS 118892) (Athlete's foot fungus).